A 281-amino-acid polypeptide reads, in one-letter code: 2-dehydro-3-deoxyphosphooctonate aldolase (281 aa).

It belongs to the KdsA family.

Its subcellular location is the cytoplasm. It catalyses the reaction D-arabinose 5-phosphate + phosphoenolpyruvate + H2O = 3-deoxy-alpha-D-manno-2-octulosonate-8-phosphate + phosphate. It functions in the pathway carbohydrate biosynthesis; 3-deoxy-D-manno-octulosonate biosynthesis; 3-deoxy-D-manno-octulosonate from D-ribulose 5-phosphate: step 2/3. It participates in bacterial outer membrane biogenesis; lipopolysaccharide biosynthesis. The protein is 2-dehydro-3-deoxyphosphooctonate aldolase of Pseudomonas entomophila (strain L48).